The primary structure comprises 416 residues: S-adenosylmethionine synthase (416 aa).

Histidine 14 contributes to the ATP binding site. Mg(2+) is bound at residue aspartate 16. Residue glutamate 42 coordinates K(+). The L-methionine site is built by glutamate 55 and glutamine 98. Residues 98 to 108 form a flexible loop region; that stretch reads QSADINQGVDR. Residues 164–166, 240–241, aspartate 249, 255–256, alanine 272, and lysine 276 each bind ATP; these read DAK, KF, and RK. Aspartate 249 is a binding site for L-methionine. Position 280 (lysine 280) interacts with L-methionine.

This sequence belongs to the AdoMet synthase family. As to quaternary structure, homotetramer; dimer of dimers. Requires Mg(2+) as cofactor. K(+) serves as cofactor.

It is found in the cytoplasm. The catalysed reaction is L-methionine + ATP + H2O = S-adenosyl-L-methionine + phosphate + diphosphate. Its pathway is amino-acid biosynthesis; S-adenosyl-L-methionine biosynthesis; S-adenosyl-L-methionine from L-methionine: step 1/1. In terms of biological role, catalyzes the formation of S-adenosylmethionine (AdoMet) from methionine and ATP. The overall synthetic reaction is composed of two sequential steps, AdoMet formation and the subsequent tripolyphosphate hydrolysis which occurs prior to release of AdoMet from the enzyme. The polypeptide is S-adenosylmethionine synthase (Flavobacterium johnsoniae (strain ATCC 17061 / DSM 2064 / JCM 8514 / BCRC 14874 / CCUG 350202 / NBRC 14942 / NCIMB 11054 / UW101) (Cytophaga johnsonae)).